The sequence spans 438 residues: Transmembrane protein 184C (438 aa).

7 consecutive transmembrane segments (helical) span residues 17-37 (LAVV…VWEL), 48-68 (AWFI…WVIL), 86-106 (ILWM…YPSI), 176-196 (VLQY…CELL), 212-232 (YLVI…LLFY), 254-274 (VVFV…VGVI), and 287-307 (AVAT…AAIA). A disordered region spans residues 358–438 (PRKKFFPEDQ…EEPSEKPVAS (81 aa)). 2 stretches are compositionally biased toward low complexity: residues 374–390 (SLLS…ASSV) and 404–413 (TVTPQTTPTT). Residues 426-438 (GVREEPSEKPVAS) are compositionally biased toward basic and acidic residues.

Belongs to the TMEM184 family.

It is found in the membrane. Its function is as follows. Possible tumor suppressor which may play a role in cell growth. This is Transmembrane protein 184C (TMEM184C) from Bos taurus (Bovine).